Here is a 494-residue protein sequence, read N- to C-terminus: Alanine--glyoxylate aminotransferase 2-like (494 aa).

Lys291 carries the post-translational modification N6-(pyridoxal phosphate)lysine.

This sequence belongs to the class-III pyridoxal-phosphate-dependent aminotransferase family. The cofactor is pyridoxal 5'-phosphate.

This is Alanine--glyoxylate aminotransferase 2-like from Drosophila melanogaster (Fruit fly).